A 209-amino-acid polypeptide reads, in one-letter code: Thymidylate kinase (209 aa).

10–17 contributes to the ATP binding site; that stretch reads GLDGAGKS.

It belongs to the thymidylate kinase family.

The enzyme catalyses dTMP + ATP = dTDP + ADP. Functionally, phosphorylation of dTMP to form dTDP in both de novo and salvage pathways of dTTP synthesis. The protein is Thymidylate kinase of Francisella tularensis subsp. holarctica (strain OSU18).